Here is a 93-residue protein sequence, read N- to C-terminus: Probable Fe(2+)-trafficking protein (93 aa).

It belongs to the Fe(2+)-trafficking protein family.

Its function is as follows. Could be a mediator in iron transactions between iron acquisition and iron-requiring processes, such as synthesis and/or repair of Fe-S clusters in biosynthetic enzymes. In Polaromonas naphthalenivorans (strain CJ2), this protein is Probable Fe(2+)-trafficking protein.